We begin with the raw amino-acid sequence, 339 residues long: 2-oxoisovalerate dehydrogenase subunit beta (339 aa).

In terms of assembly, heterodimer of an alpha and a beta chain. The cofactor is thiamine diphosphate.

The enzyme catalyses N(6)-[(R)-lipoyl]-L-lysyl-[protein] + 3-methyl-2-oxobutanoate + H(+) = N(6)-[(R)-S(8)-2-methylpropanoyldihydrolipoyl]-L-lysyl-[protein] + CO2. Its function is as follows. The branched-chain alpha-keto dehydrogenase complex catalyzes the overall conversion of alpha-keto acids to acyl-CoA and CO(2). It contains multiple copies of three enzymatic components: branched-chain alpha-keto acid decarboxylase (E1), lipoamide acyltransferase (E2) and lipoamide dehydrogenase (E3). The chain is 2-oxoisovalerate dehydrogenase subunit beta (bkdA2) from Pseudomonas putida (Arthrobacter siderocapsulatus).